We begin with the raw amino-acid sequence, 450 residues long: Phosphoglucosamine mutase (450 aa).

Ser-102 serves as the catalytic Phosphoserine intermediate. The Mg(2+) site is built by Ser-102, Asp-244, Asp-246, and Asp-248. At Ser-102 the chain carries Phosphoserine.

The protein belongs to the phosphohexose mutase family. Mg(2+) is required as a cofactor. Post-translationally, activated by phosphorylation.

It catalyses the reaction alpha-D-glucosamine 1-phosphate = D-glucosamine 6-phosphate. In terms of biological role, catalyzes the conversion of glucosamine-6-phosphate to glucosamine-1-phosphate. In Syntrophomonas wolfei subsp. wolfei (strain DSM 2245B / Goettingen), this protein is Phosphoglucosamine mutase.